We begin with the raw amino-acid sequence, 89 residues long: Protein RALF-like 5 (89 aa).

A signal peptide spans 1–25 (MLKAQVFMFVTVLVFVCVFINSNDA). Cystine bridges form between Cys-39/Cys-48 and Cys-61/Cys-67.

Belongs to the plant rapid alkalinization factor (RALF) family.

The protein localises to the secreted. In terms of biological role, cell signaling peptide that may regulate plant stress, growth, and development. Mediates a rapid alkalinization of extracellular space by mediating a transient increase in the cytoplasmic Ca(2+) concentration leading to a calcium-dependent signaling events through a cell surface receptor and a concomitant activation of some intracellular mitogen-activated protein kinases. In Arabidopsis thaliana (Mouse-ear cress), this protein is Protein RALF-like 5 (RALFL5).